The following is a 60-amino-acid chain: MNTQRAKDISESAAMAYVTYEGVPIYIQHVNEDKETARIFPIGNPQFEQEVLLSDLQEHF.

Belongs to the SspH family.

The protein resides in the spore core. The protein is Small, acid-soluble spore protein H of Bacillus velezensis (strain DSM 23117 / BGSC 10A6 / LMG 26770 / FZB42) (Bacillus amyloliquefaciens subsp. plantarum).